A 236-amino-acid polypeptide reads, in one-letter code: Syntaxin-8 (236 aa).

At 1-215 the chain is on the cytoplasmic side; it reads MAPDPWFSTY…LVDRKSTSCG (215 aa). The stretch at 42–65 forms a coiled coil; sequence LTIRTLLKNLKVKIDLLKDLLLRA. Residues 145-207 form the t-SNARE coiled-coil homology domain; it reads QKIIQEQDAG…RTEARRVTLV (63 aa). Position 160 is a phosphoserine (serine 160). Residues 216 to 232 traverse the membrane as a helical; Anchor for type IV membrane protein segment; that stretch reads MIMVILLLLVAIVVVAV. Over 233–236 the chain is Vesicular; that stretch reads WPTN.

Belongs to the syntaxin family. As to quaternary structure, forms a SNARE complex with STX7, VTI1B and VAMP8 which functions in the homotypic fusion of late endosomes. Part of the SNARE core complex containing STX7, VAMP8 and VTI1B. Interacts with VAMP8. Interacts with HECTD3. Interacts with TPC1. Post-translationally, ubiquitinated by HECTD3.

It localises to the membrane. Vesicle trafficking protein that functions in the early secretory pathway, possibly by mediating retrograde transport from cis-Golgi membranes to the ER. This Mus musculus (Mouse) protein is Syntaxin-8 (Stx8).